Here is a 347-residue protein sequence, read N- to C-terminus: Transcription factor EC (347 aa).

The tract at residues methionine 1 to serine 119 is necessary for transcriptional transactivation. The region spanning glutamine 139 to leucine 192 is the bHLH domain. Residues proline 271–leucine 347 form a necessary for transcriptional transactivation region. Residues aspartate 319 to leucine 347 form a disordered region. A compositionally biased stretch (low complexity) spans serine 326–serine 341.

It belongs to the MiT/TFE family. As to quaternary structure, homodimer. Forms heterodimers with TFE3. Forms heterodimers with MITF. Interacts with MITF. Expressed moderately in spleen, kidney, bone marrow, small intestine and leukocytes. Expressed weakly in testis, trachea and colon.

The protein localises to the nucleus. Its function is as follows. Transcriptional regulator that acts as a repressor or an activator. Acts as a transcriptional repressor on minimal promoter containing element F (that includes an E-box sequence). Binds to element F in an E-box sequence-specific manner. Acts as a transcriptional transactivator on the proximal promoter region of the tartrate-resistant acid phosphatase (TRAP) E-box containing promoter. Collaborates with MITF in target gene activation. Acts as a transcriptional repressor on minimal promoter containing mu E3 enhancer sequence. Binds to mu E3 DNA sequence of the immunoglobulin heavy-chain gene enhancer. Binds DNA in a homo- or heterodimeric form. This chain is Transcription factor EC (TFEC), found in Homo sapiens (Human).